The chain runs to 450 residues: Casein kinase 1-like protein 1 (450 aa).

In terms of domain architecture, Protein kinase spans 9–278 (FRLGRKIGSG…LKRIFRDLFI (270 aa)). ATP is bound by residues 15-23 (IGSGSFGEI) and Lys-38. The Proton acceptor role is filled by Asp-128. Residues 311-450 (AVGTSAALPP…LQVSDEHHPH (140 aa)) are disordered. Basic and acidic residues predominate over residues 328–342 (YTGEEEGRPHMESSR). Over residues 349–365 (LDNSGNISNQPTSSSAR) the composition is skewed to polar residues. Residues 371 to 382 (SSSLFAQSAGSS) are compositionally biased toward low complexity.

This sequence belongs to the protein kinase superfamily. CK1 Ser/Thr protein kinase family. Casein kinase I subfamily. Monomer. Autophosphorylated. Expressed in flowers.

The protein resides in the cytoplasm. It is found in the cell junction. Its subcellular location is the plasmodesma. The enzyme catalyses L-seryl-[protein] + ATP = O-phospho-L-seryl-[protein] + ADP + H(+). It catalyses the reaction L-threonyl-[protein] + ATP = O-phospho-L-threonyl-[protein] + ADP + H(+). In terms of biological role, casein kinases are operationally defined by their preferential utilization of acidic proteins such as caseins as substrates. It can phosphorylate a large number of proteins. This Arabidopsis thaliana (Mouse-ear cress) protein is Casein kinase 1-like protein 1.